The sequence spans 592 residues: MYIQTQFASLLLLAGTSLASQVRKYNFTITSQWSSGDGHGRPVFMINGQSPGPLIEADEGDEIEVFVDNQLAAETTMHWHGIYQIDRPWNDGVPGVTQYSMQPRDTYTYRFTVQQQYGSYFYHGHFGPAFADGMRGPMWIAPAAWRPRPYELISDSSHDVEQMKKAEKHPFHVVISDWNAEPMDILLVMYRDTGIVPWCSNSIVLNGKGRTYCHSAELIESVGGPGRNTLGCLMQPDQELYSNEQVCEATQTDLEIFQAEEGHEWIWINFIHSGAHHELQISVDEHEIVVVAADGEFTYPQRVHAANCNLGERISILVHLNQKPGDYAIRVTSLRQEQVIQGLGILRYPGSSHGAQEAEPPATKPWVHLNGTLISDKLQQMDEMKLAPFPSRPPPPQSDHTLKFFVNMTGTGSWALNIGPHQAFRQQLPPLLWEEDSRGVTTYESDVQGGSMQNGSVVDIIFTNGANVNSQHPFHKHNNKAWVIGTGTGGFPWDTVDEAIQQGGMADSFNFVDPPIRDGCRLGNTTGDWTVIRYDIAFPAASMLHCHMIHHFGAGQQVVLLEGVESMAKIPAEMKDRVHSNFRPPLRYGPLD.

The signal sequence occupies residues 1-19 (MYIQTQFASLLLLAGTSLA). Asn-26 is a glycosylation site (N-linked (GlcNAc...) asparagine). 2 Plastocyanin-like domains span residues 32 to 142 (QWSS…WIAP) and 173 to 350 (VVIS…RYPG). Residues His-78, His-80, His-123, and His-125 each coordinate Cu cation. Asn-370, Asn-407, and Asn-454 each carry an N-linked (GlcNAc...) asparagine glycan. The Plastocyanin-like 3 domain maps to 445 to 563 (SDVQGGSMQN…AGQQVVLLEG (119 aa)). His-475 is a binding site for Cu cation. The N-linked (GlcNAc...) asparagine glycan is linked to Asn-524.

This sequence belongs to the multicopper oxidase family.

The protein resides in the cell surface. It functions in the pathway pigment biosynthesis; melanin biosynthesis. Functionally, laccase involved the biosynthesis of dihydroxynaphthalene (DHN)-melanin, a bluish-green pigment forming a dark layer in the conidial wall that protects the conidia from UV radiations. The first step of the pathway is the production of the pentaketide 1,3,6,8-tetrahydroxynaphthalene (1,3,6,8-THN or T4HN) by the polyketide synthase PfmaE though condensation of acetyl-CoA with malonyl-CoA. T4HN is not stable and easily oxidizes into the stable form flaviolin. T4HN is also substrate of the hydroxynaphthalene reductase PfmaG to yield scytalone. The scytalone dehydratase PfmaJ then reduces scytalone to 1,3,8-THN. 1,3,8-THN is then substrate of the hydroxynaphthalene reductase PfmaI to yield vermelone. Vermelone is further converted by the multicopper oxidase PfmaD to 1,8-DHN. Finally the laccase PFICI_06862 transforms 1,8-DHN to DHN-melanin. The roles of the 5-oxoprolinase PfmaA and the proline iminopeptidase PfmaB within the cluster have not been elucidated yet. In Pestalotiopsis fici (strain W106-1 / CGMCC3.15140), this protein is Laccase PFICI_06862.